The primary structure comprises 2120 residues: Separin (2120 aa).

Ser1126 is subject to Phosphoserine. The segment at 1299 to 1355 (IKSVPGSEPSKTQGQKRSGRGRQKLASAPLRLNNTSQKGLEGRGLPCTPKPPDRIRQ) is disordered. Residues Ser1396 and Ser1399 each carry the phosphoserine modification. 2 disordered regions span residues 1412 to 1485 (AEEP…PEIM) and 1507 to 1561 (GSDG…PRLR). 2 stretches are compositionally biased toward basic residues: residues 1418–1432 (RGTA…RKGL) and 1454–1463 (RSRRAKKVAS). Positions 1464 to 1473 (RHCEERRPQR) are enriched in basic and acidic residues. The residue at position 1508 (Ser1508) is a Phosphoserine. Residues 1548-1558 (PDKESDKDLGP) show a composition bias toward basic and acidic residues. One can recognise a Peptidase C50 domain in the interval 1945–2040 (PRSTFYVLNP…SAALAVRGNL (96 aa)). The active site involves Cys2029.

Interacts with PTTG1. Interacts with RAD21. Autocleaves. This function, which is not essential for its protease activity, is unknown. Post-translationally, phosphorylated by CDK1. There are 8 Ser/Thr phosphorylation sites. Among them, Ser-1126 phosphorylation is the major site, which conducts to the enzyme inactivation.

It localises to the cytoplasm. The protein localises to the nucleus. The enzyme catalyses All bonds known to be hydrolyzed by this endopeptidase have arginine in P1 and an acidic residue in P4. P6 is often occupied by an acidic residue or by a hydroxy-amino-acid residue, the phosphorylation of which enhances cleavage.. With respect to regulation, regulated by at least two independent mechanisms. First, it is inactivated via its interaction with securin/PTTG1, which probably covers its active site. The association with PTTG1 is not only inhibitory, since PTTG1 is also required for activating it, the enzyme being inactive in cells in which PTTG1 is absent. PTTG1 degradation at anaphase, liberates it and triggers RAD21 cleavage. Second, phosphorylation at Ser-1126 inactivates it. The complete phosphorylation during mitosis, is removed when cells undergo anaphase. Activation of the enzyme at the metaphase-anaphase transition probably requires the removal of both securin and inhibitory phosphate. Functionally, caspase-like protease, which plays a central role in the chromosome segregation by cleaving the SCC1/RAD21 subunit of the cohesin complex at the onset of anaphase. During most of the cell cycle, it is inactivated by different mechanisms. This is Separin (ESPL1) from Homo sapiens (Human).